A 399-amino-acid polypeptide reads, in one-letter code: Acetylornithine aminotransferase (399 aa).

Pyridoxal 5'-phosphate-binding positions include 99 to 100 (GA) and F132. R135 serves as a coordination point for N(2)-acetyl-L-ornithine. 217–220 (DEVQ) provides a ligand contact to pyridoxal 5'-phosphate. K246 is subject to N6-(pyridoxal phosphate)lysine. Position 274 (T274) interacts with N(2)-acetyl-L-ornithine. A pyridoxal 5'-phosphate-binding site is contributed by T275.

Belongs to the class-III pyridoxal-phosphate-dependent aminotransferase family. ArgD subfamily. Homodimer. Pyridoxal 5'-phosphate is required as a cofactor.

The protein resides in the cytoplasm. The catalysed reaction is N(2)-acetyl-L-ornithine + 2-oxoglutarate = N-acetyl-L-glutamate 5-semialdehyde + L-glutamate. It functions in the pathway amino-acid biosynthesis; L-arginine biosynthesis; N(2)-acetyl-L-ornithine from L-glutamate: step 4/4. In Agrobacterium fabrum (strain C58 / ATCC 33970) (Agrobacterium tumefaciens (strain C58)), this protein is Acetylornithine aminotransferase.